A 306-amino-acid polypeptide reads, in one-letter code: Probable cobalamin biosynthesis protein CobD (306 aa).

5 helical membrane passes run Leu-54–Ile-74, Ile-88–Ser-108, Ile-155–Phe-175, Ile-207–Tyr-227, and Ser-286–Met-306.

This sequence belongs to the CobD/CbiB family.

Its subcellular location is the cell membrane. It participates in cofactor biosynthesis; adenosylcobalamin biosynthesis. In terms of biological role, converts cobyric acid to cobinamide by the addition of aminopropanol on the F carboxylic group. The sequence is that of Probable cobalamin biosynthesis protein CobD from Methanococcus maripaludis (strain DSM 14266 / JCM 13030 / NBRC 101832 / S2 / LL).